A 502-amino-acid chain; its full sequence is Myocilin (502 aa).

Positions 1–31 (MPSCAYCCSCGPKMPALQLLFLACLVWGMGA) are cleaved as a signal peptide. The stretch at 82 to 183 (ADLESTKARV…QEVARLRRGQ (102 aa)) forms a coiled coil. A disordered region spans residues 166–198 (ARRLEGSSQEVARLRRGQCPSTHHPSQDMLPGS). A glycan (N-linked (GlcNAc...) asparagine) is linked at Asn229. Residues 242–501 (GCGVLMWVGE…MVTYDIKLSE (260 aa)) enclose the Olfactomedin-like domain. A disulfide bond links Cys243 and Cys431. Ca(2+)-binding residues include Asp378, Asn426, Ala427, Val475, and Asp476.

In terms of assembly, homodimer (via N-terminus). Can also form higher oligomers. Interacts with OLFM3, FN1, NRCAM, GLDN and NFASC. Interacts (via N-terminus) with MYL2. Interacts with SFRP1, FRZB, FZD7, FZD10, FZD1 and WIF1; regulates Wnt signaling. Interacts with SNTA1; regulates muscle hypertrophy. Interacts with ERBB2 and ERBB3; activates ERBB2-ERBB3 signaling pathway. Interacts with SNCG; affects its secretion and its aggregation. Post-translationally, palmitoylated. In terms of processing, undergoes a calcium-dependent proteolytic cleavage at Gln-225 by CAPN2 in the endoplasmic reticulum. The result is the production of two fragments, one of 35 kDa containing the C-terminal olfactomedin-like domain, and another of 20 kDa containing the N-terminal leucine zipper-like domain. Glycosylated. Highly expressed in skeletal muscle and retina. Also detected at lower levels in thyroid gland but not in other endocrine glands such as the adrenal or pituitary glands.

The protein resides in the secreted. Its subcellular location is the golgi apparatus. It localises to the cytoplasmic vesicle. The protein localises to the extracellular space. It is found in the extracellular matrix. The protein resides in the extracellular exosome. Its subcellular location is the mitochondrion. It localises to the mitochondrion intermembrane space. The protein localises to the mitochondrion inner membrane. It is found in the mitochondrion outer membrane. The protein resides in the rough endoplasmic reticulum. Its subcellular location is the cell projection. It localises to the cilium. The protein localises to the endoplasmic reticulum. In terms of biological role, secreted glycoprotein regulating the activation of different signaling pathways in adjacent cells to control different processes including cell adhesion, cell-matrix adhesion, cytoskeleton organization and cell migration. Promotes substrate adhesion, spreading and formation of focal contacts. Negatively regulates cell-matrix adhesion and stress fiber assembly through Rho protein signal transduction. Modulates the organization of actin cytoskeleton by stimulating the formation of stress fibers through interactions with components of Wnt signaling pathways. Promotes cell migration through activation of PTK2 and the downstream phosphatidylinositol 3-kinase signaling. Plays a role in bone formation and promotes osteoblast differentiation in a dose-dependent manner through mitogen-activated protein kinase signaling. Mediates myelination in the peripheral nervous system through ERBB2/ERBB3 signaling. Plays a role as a regulator of muscle hypertrophy through the components of dystrophin-associated protein complex. Involved in positive regulation of mitochondrial depolarization. Plays a role in neurite outgrowth. May participate in the obstruction of fluid outflow in the trabecular meshwork. This chain is Myocilin (Myoc), found in Rattus norvegicus (Rat).